Here is a 425-residue protein sequence, read N- to C-terminus: DNA replication and repair protein RecF (425 aa).

An ATP-binding site is contributed by 30-37 (GPNGHGKT).

This sequence belongs to the RecF family.

It is found in the cytoplasm. Its function is as follows. The RecF protein is involved in DNA metabolism; it is required for DNA replication and normal SOS inducibility. RecF binds preferentially to single-stranded, linear DNA. It also seems to bind ATP. In Corynebacterium jeikeium (strain K411), this protein is DNA replication and repair protein RecF.